A 238-amino-acid polypeptide reads, in one-letter code: SPEG neighbor protein (238 aa).

Positions 29-55 constitute an IQ domain; sequence QSAAIRIQASYRGHRSRKELREKGPPR. Ig-like domains are found at residues 54-143 and 147-236; these read PRVL…ARIL and PTKI…ARVD.

This Homo sapiens (Human) protein is SPEG neighbor protein.